A 435-amino-acid polypeptide reads, in one-letter code: MADQESDKSIEIWKSFKLIKGLESARGNGTSMISLIMPPRDQVARVTKMLADEYGTASNIKSRVNRQSVLSAITSAQQRLKLYNKVPPNGLVLYTGTIVTDDGKEKKVTIDFEPFKPINASLYLCDNKFHTEPLNELLESDDKFGFIVMDGNGTLFGTLSGNTREVLHKFTVDLPKKHGRGGQSALRFARLRMEKRHNYVRKTAELATQFYINPATSQPNVSGLILAGSADFKTELSQSELFDPRLQAKILNVVDVSYGGENGFNQAIELSAEILSNVKFIQEKKLIGKYFEEISQDTGKYVFGVDDTLKALDMGAVETLIVWENLDINRYELKNGATGETVIKHLGKEQENDQSNFHDAESNAELEIVEKMPLLEWFANEYKRFGCTLEFVTNKSQEGSQFCRGFGGIGGLLRYQLDMRTFDELSDGEVYEDSD.

N-acetylalanine is present on Ala2.

The protein belongs to the eukaryotic release factor 1 family. In terms of assembly, heterodimer of two subunits, one of which binds GTP.

It localises to the cytoplasm. Functionally, directs the termination of nascent peptide synthesis (translation) in response to the termination codons UAA, UAG and UGA. Modulates plant growth and development. The sequence is that of Eukaryotic peptide chain release factor subunit 1-3 from Brassica oleracea var. botrytis (Cauliflower).